The primary structure comprises 354 residues: Protein sex-lethal (354 aa).

Positions 1 to 21 (MYGNNNPGSNNNNGGYPPYGY) are disordered. RRM domains are found at residues 125-203 (TNLI…YARP) and 211-291 (TNLY…LAEE).

In terms of assembly, part of a complex containing fl(2)d, Sxl and vir. Part of a complex composed of at least mei-P26, bam, bgcn and Sxl; this complex is involved in translational repression of nanos mRNA. interacts with mei-p26. Interacts with nito. Interacts with Unr; cooperates with Unr to prevent translation of msl-2 transcripts. Interacts with how; promoting nuclear retention of msl-2 transcripts. In terms of tissue distribution, expressed in somatic tissues, but not in the pole cells, which are the precursors of the germline. Expressed in the anterior of the germarium.

The protein localises to the nucleus. Its subcellular location is the cytoplasm. Functionally, sex determination switch protein, which controls sexual development and dosage compensation in females. Sxl protein is only active in females: it is inactive in males throughout development. Acts as a mRNA-binding protein, which specifically binds to a subset of pre-mRNAs and mRNAs and regulates their processing and/or translation. Binds nanos mRNA and is involved in bam-bgcn mediated repression of nanos mRNA translation. Promotes sexual development by controlling the female-specific alternative splicing of the transformer (tra) pre-mRNA: binds tightly to a characteristic uridine-rich polypyrimidine tract at the non-sex specific 3' splice site in one of the tra introns, preventing the general splicing factor U2AF from binding to this site and forcing it to bind to the female-specific 3' splice site. Acts as an inhibitor of dosage compensation in females by preventing production of msl-2 protein, an essential component of the MSL complex, the complex that mediates X-chromosome dosage compensation. Specifically binds to uridine stretches in both the 5'- and 3'-UTR of msl-2 transcripts. Sxl first acts at the splicing level by promoting retention of an intron in the 5' UTR of msl-2 pre-mRNA. The retained intron contains Sxl-binding sites that are required for subsequent steps of repression: after msl-2 mRNA export into the cytoplasm, Sxl coordinates its translational repression by targeting early steps of translation initiation. Together with how, Sxl also prevents production of msl-2 protein by preventing nuclear export of msl-2 transcripts. Its function is as follows. Embryo-specific product, which is expressed early only in female embryos and specifies female-adult specific splicing. The protein is Protein sex-lethal of Drosophila melanogaster (Fruit fly).